A 129-amino-acid chain; its full sequence is MFTFYMYLAPIVAGVLIGLNWLLAKSNPNIDKAGPFECGFTSYQQSRAAFSVAFILVAILFLPFDLEISSILPYVTSAYNNGLYGLIILIIFLMMLVIAFILEIQLRVLKIERSYDKDRSDSNYYDHEI.

Helical transmembrane passes span phenylalanine 4–alanine 24, alanine 48–isoleucine 68, and glycine 82–leucine 102.

The protein belongs to the complex I subunit 3 family.

The protein resides in the mitochondrion membrane. The enzyme catalyses a ubiquinone + NADH + 5 H(+)(in) = a ubiquinol + NAD(+) + 4 H(+)(out). Functionally, core subunit of the mitochondrial membrane respiratory chain NADH dehydrogenase (Complex I) that is believed to belong to the minimal assembly required for catalysis. Complex I functions in the transfer of electrons from NADH to the respiratory chain. The immediate electron acceptor for the enzyme is believed to be ubiquinone. This chain is NADH-ubiquinone oxidoreductase chain 3 (NAD3), found in Candida albicans (strain SC5314 / ATCC MYA-2876) (Yeast).